The sequence spans 257 residues: Acetylglutamate kinase (257 aa).

Residues 43 to 44, Arg65, and Asn157 contribute to the substrate site; that span reads GG. ATP is bound by residues 180–185 and 208–210; these read DVSGIL and IIT.

This sequence belongs to the acetylglutamate kinase family. ArgB subfamily. As to quaternary structure, homodimer.

The protein resides in the cytoplasm. The enzyme catalyses N-acetyl-L-glutamate + ATP = N-acetyl-L-glutamyl 5-phosphate + ADP. Its pathway is amino-acid biosynthesis; L-arginine biosynthesis; N(2)-acetyl-L-ornithine from L-glutamate: step 2/4. In terms of biological role, catalyzes the ATP-dependent phosphorylation of N-acetyl-L-glutamate. This is Acetylglutamate kinase from Escherichia coli O139:H28 (strain E24377A / ETEC).